The chain runs to 87 residues: Phosphoribosyl-ATP pyrophosphatase (87 aa).

Belongs to the PRA-PH family.

It localises to the cytoplasm. It carries out the reaction 1-(5-phospho-beta-D-ribosyl)-ATP + H2O = 1-(5-phospho-beta-D-ribosyl)-5'-AMP + diphosphate + H(+). The protein operates within amino-acid biosynthesis; L-histidine biosynthesis; L-histidine from 5-phospho-alpha-D-ribose 1-diphosphate: step 2/9. This Corynebacterium glutamicum (strain ATCC 13032 / DSM 20300 / JCM 1318 / BCRC 11384 / CCUG 27702 / LMG 3730 / NBRC 12168 / NCIMB 10025 / NRRL B-2784 / 534) protein is Phosphoribosyl-ATP pyrophosphatase (hisE).